A 322-amino-acid polypeptide reads, in one-letter code: HPr kinase/phosphorylase (322 aa).

Residues His146 and Lys167 contribute to the active site. 161 to 168 provides a ligand contact to ATP; it reads GDSGLGKS. Ser168 provides a ligand contact to Mg(2+). Asp185 serves as the catalytic Proton acceptor; for phosphorylation activity. Proton donor; for dephosphorylation activity. Positions 209-218 are important for the catalytic mechanism of both phosphorylation and dephosphorylation; it reads LEVRGLGLLD. Residue Glu210 participates in Mg(2+) binding. Arg250 is an active-site residue. Residues 271–276 are important for the catalytic mechanism of dephosphorylation; that stretch reads QVAAGR.

The protein belongs to the HPrK/P family. Homohexamer. It depends on Mg(2+) as a cofactor.

The enzyme catalyses [HPr protein]-L-serine + ATP = [HPr protein]-O-phospho-L-serine + ADP + H(+). The catalysed reaction is [HPr protein]-O-phospho-L-serine + phosphate + H(+) = [HPr protein]-L-serine + diphosphate. In terms of biological role, catalyzes the ATP- as well as the pyrophosphate-dependent phosphorylation of a specific serine residue in HPr, a phosphocarrier protein of the phosphoenolpyruvate-dependent sugar phosphotransferase system (PTS). HprK/P also catalyzes the pyrophosphate-producing, inorganic phosphate-dependent dephosphorylation (phosphorolysis) of seryl-phosphorylated HPr (P-Ser-HPr). The polypeptide is HPr kinase/phosphorylase (Burkholderia multivorans (strain ATCC 17616 / 249)).